The following is a 196-amino-acid chain: Cysteine/O-acetylserine efflux protein (196 aa).

Residues 1–21 (MTPTLISAFLTYTLITALTPG) form a helical membrane-spanning segment. Over 22–41 (PNNILALSSVTSHGLRRSLR) the chain is Cytoplasmic. A helical membrane pass occupies residues 42-62 (VLAGMSVGFIITMLICAALTF). Over 63–70 (SLVELDSR) the chain is Periplasmic. The helical transmembrane segment at 71–91 (FTLVLGWIGAAYILWLAWQIA) threads the bilayer. The Cytoplasmic segment spans residues 92-114 (KSKPATGTPSVEPVGFWASLGLQ). The helical transmembrane segment at 115-135 (FVNVKIILYGITALSTFVLPV) threads the bilayer. Over 136–139 (TREP) the chain is Periplasmic. Residues 140 to 160 (VWLISVSLLLAAIGALGNLCW) traverse the membrane as a helical segment. The Cytoplasmic segment spans residues 161–170 (ALAGHLFQRL). Residues 171-191 (FLLYGRQLNWMLAALLVYCAV) form a helical membrane-spanning segment. Residues 192–196 (RIVVE) lie on the Periplasmic side of the membrane.

This sequence belongs to the Rht family.

The protein localises to the cell inner membrane. It catalyses the reaction O-acetyl-L-serine(in) = O-acetyl-L-serine(out). It carries out the reaction L-cysteine(in) = L-cysteine(out). In terms of biological role, exporter of O-acetylserine (OAS) and cysteine. In Klebsiella pneumoniae subsp. pneumoniae (strain ATCC 700721 / MGH 78578), this protein is Cysteine/O-acetylserine efflux protein (eamB).